The sequence spans 152 residues: Large ribosomal subunit protein bL9 (152 aa).

The protein belongs to the bacterial ribosomal protein bL9 family.

Its function is as follows. Binds to the 23S rRNA. The polypeptide is Large ribosomal subunit protein bL9 (Synechococcus sp. (strain CC9311)).